We begin with the raw amino-acid sequence, 294 residues long: N-acetylmuramic acid 6-phosphate etherase (294 aa).

Residues 54-217 (VIQSFEEEGR…STASMIGVGK (164 aa)) form the SIS domain. Glutamate 82 functions as the Proton donor in the catalytic mechanism. Glutamate 113 is a catalytic residue.

Belongs to the GCKR-like family. MurNAc-6-P etherase subfamily. As to quaternary structure, homodimer.

The catalysed reaction is N-acetyl-D-muramate 6-phosphate + H2O = N-acetyl-D-glucosamine 6-phosphate + (R)-lactate. It functions in the pathway amino-sugar metabolism; N-acetylmuramate degradation. In terms of biological role, specifically catalyzes the cleavage of the D-lactyl ether substituent of MurNAc 6-phosphate, producing GlcNAc 6-phosphate and D-lactate. This Bacillus cereus (strain AH820) protein is N-acetylmuramic acid 6-phosphate etherase.